Consider the following 184-residue polypeptide: Probable chemoreceptor glutamine deamidase CheD (184 aa).

It belongs to the CheD family.

The catalysed reaction is L-glutaminyl-[protein] + H2O = L-glutamyl-[protein] + NH4(+). Functionally, probably deamidates glutamine residues to glutamate on methyl-accepting chemotaxis receptors (MCPs), playing an important role in chemotaxis. In Rhizobium etli (strain CIAT 652), this protein is Probable chemoreceptor glutamine deamidase CheD.